A 203-amino-acid chain; its full sequence is UDP-N-acetylglucosamine transferase subunit ALG13 (203 aa).

The protein belongs to the glycosyltransferase 28 family. As to quaternary structure, heterodimer with ALG14 to form a functional enzyme.

The protein resides in the endoplasmic reticulum. The enzyme catalyses an N-acetyl-alpha-D-glucosaminyl-diphospho-di-trans,poly-cis-dolichol + UDP-N-acetyl-alpha-D-glucosamine = an N,N'-diacetylchitobiosyl-diphospho-di-trans,poly-cis-dolichol + UDP + H(+). Its function is as follows. Involved in protein N-glycosylation. Essential for the second step of the dolichol-linked oligosaccharide pathway. In Eremothecium gossypii (strain ATCC 10895 / CBS 109.51 / FGSC 9923 / NRRL Y-1056) (Yeast), this protein is UDP-N-acetylglucosamine transferase subunit ALG13 (ALG13).